A 262-amino-acid polypeptide reads, in one-letter code: GDT1-like protein C186.05c (262 aa).

5 consecutive transmembrane segments (helical) span residues 31 to 51 (ISMI…ALLA), 57 to 77 (ASVF…AVLV), 83 to 103 (FLFP…IFGV), 208 to 228 (VLDV…VAVI), and 242 to 262 (VLFF…FQGF).

It belongs to the GDT1 family.

The protein resides in the endoplasmic reticulum membrane. The chain is GDT1-like protein C186.05c from Schizosaccharomyces pombe (strain 972 / ATCC 24843) (Fission yeast).